The primary structure comprises 86 residues: Large ribosomal subunit protein bL27 (86 aa).

Residues 1–31 (MAHKKAGGSSRNGRDSAGQRRGVKKFGGEPV) form a disordered region.

Belongs to the bacterial ribosomal protein bL27 family.

In Desulfotalea psychrophila (strain LSv54 / DSM 12343), this protein is Large ribosomal subunit protein bL27.